Consider the following 582-residue polypeptide: Phosphoribosylaminoimidazole carboxylase (582 aa).

One can recognise an ATP-grasp domain in the interval 114 to 305 (KKYLAERGVA…QFENHLRAIL (192 aa)). Residue 143–200 (AGRLGLPLMLKAKTLAYDGRGNSPLKSASSGDIQASLKFLGDRPLYAEGWAPFVKEVA) participates in ATP binding.

This sequence in the C-terminal section; belongs to the AIR carboxylase family. Class I subfamily.

It carries out the reaction 5-amino-1-(5-phospho-D-ribosyl)imidazole-4-carboxylate + H(+) = 5-amino-1-(5-phospho-beta-D-ribosyl)imidazole + CO2. It participates in purine metabolism; IMP biosynthesis via de novo pathway; 5-amino-1-(5-phospho-D-ribosyl)imidazole-4-carboxylate from 5-amino-1-(5-phospho-D-ribosyl)imidazole (carboxylase route): step 1/1. The chain is Phosphoribosylaminoimidazole carboxylase (ADE2) from Cryptococcus neoformans var. neoformans serotype D (strain JEC21 / ATCC MYA-565) (Filobasidiella neoformans).